A 293-amino-acid chain; its full sequence is Ribonuclease HIII (293 aa).

The 216-residue stretch at 78-293 (LPLIGTDEVG…TEKAKKRLER (216 aa)) folds into the RNase H type-2 domain. 3 residues coordinate a divalent metal cation: Asp-84, Glu-85, and Asp-187.

The protein belongs to the RNase HII family. RnhC subfamily. Mn(2+) serves as cofactor. Requires Mg(2+) as cofactor.

The protein localises to the cytoplasm. The enzyme catalyses Endonucleolytic cleavage to 5'-phosphomonoester.. Its function is as follows. Endonuclease that specifically degrades the RNA of RNA-DNA hybrids. The chain is Ribonuclease HIII from Streptococcus pneumoniae (strain Taiwan19F-14).